A 938-amino-acid chain; its full sequence is Protein O-mannosyl-transferase Tmtc2 (938 aa).

Residue M1 is a topological domain, cytoplasmic. A helical transmembrane segment spans residues 2-22 (PSLEPWLWGDSCSWLGMLAML). Residues 23–34 (RLRLHKSNMDFT) are Extracellular-facing. The chain crosses the membrane as a helical span at residues 35 to 55 (CLFCCSLAFVLYLNTLGAGFV). The Cytoplasmic segment spans residues 56–108 (YDDRRAILANADVSGGTPWQRSFSNDFWGTPLTDSGSHGSWRPLCVLSFRLNY). A helical membrane pass occupies residues 109–129 (LIGGGFAPWGFHLVNNLLHCV). Residues 130-139 (ATALVVRVAR) lie on the Extracellular side of the membrane. Residues 140-160 (TLLASVWAVLAAGALFAAHPI) traverse the membrane as a helical segment. The Cytoplasmic segment spans residues 161-164 (HTEA). A helical membrane pass occupies residues 165 to 185 (VAGVVGRADLAACVCYLLTYL). At 186 to 208 (SYLRHMRWRESGDPRQWLALGAT) the chain is on the extracellular side. Residues 209–229 (LILAAAGLLCKETAITALLVC) form a helical membrane-spanning segment. The Cytoplasmic portion of the chain corresponds to 230–249 (ALFDVMRGLSGQVDKQRLRS). Residues 250–270 (VCIVLGALFCMAYCRLVIVPG) traverse the membrane as a helical segment. Residues 271 to 291 (PQTAFSSADNPIARTPSAWTR) are Extracellular-facing. The chain crosses the membrane as a helical span at residues 292–312 (LLTFLYLPVFNLRLLLQPNVL). The Cytoplasmic portion of the chain corresponds to 313 to 510 (SFDWGMDALP…HACVLIMSLS (198 aa)). The interval 450-480 (RSSSSCSNSTNSSSSSSSSSSSSSSSSSSLS) is disordered. Residues 511–531 (FLALPFLPASNLLFYVGFVVA) traverse the membrane as a helical segment. The Extracellular portion of the chain corresponds to 532 to 533 (ER). The helical transmembrane segment at 534–554 (LLYLPSVGFCLLVGYGVSKLM) threads the bilayer. Topologically, residues 555-562 (SCNQRTRN) are cytoplasmic. The chain crosses the membrane as a helical span at residues 563–580 (ILLLSFSLLLAAMSLRTL). The Extracellular segment spans residues 581-938 (RRNADWRDEE…NLAKLGVTNV (358 aa)). TPR repeat units follow at residues 602–635 (PKALGNLGSVLSSQGRYEEAKQVLQEAIRFRPNM), 636–669 (ADVHFNLGILHQNQQVYPAAVECFQRAIKFRPNL), 670–703 (AVAYLNLGISFIALGKRQQAIEILQAGSNLDGAA), 715–748 (SSAYLQLGALYVEQGKLQRALAIYREALSSLPGL), 753–786 (EILYQRIGDVLGRLQQWDEAERHHRAALELQPNQ), 788–821 (AAHLSYGITLARNSSRASEAEMWFKRALKLAPEQ), 822–855 (ASVYHHYAEFLSLQSRHHESAIYHRRAAELAPND), 856–889 (YTLVVAAATAMRLLDRKVDAEMWYRKAVALRPGD), and 890–923 (AHAHTNLGAILHLLGRTNHAAASYKAALRLQPGD). A glycan (N-linked (GlcNAc...) asparagine) is linked at N800.

Belongs to the TMTC family.

It is found in the membrane. The protein resides in the endoplasmic reticulum. It carries out the reaction a di-trans,poly-cis-dolichyl beta-D-mannosyl phosphate + L-seryl-[protein] = 3-O-(alpha-D-mannosyl)-L-seryl-[protein] + a di-trans,poly-cis-dolichyl phosphate + H(+). It catalyses the reaction a di-trans,poly-cis-dolichyl beta-D-mannosyl phosphate + L-threonyl-[protein] = 3-O-(alpha-D-mannosyl)-L-threonyl-[protein] + a di-trans,poly-cis-dolichyl phosphate + H(+). It participates in protein modification; protein glycosylation. Functionally, transfers mannosyl residues to the hydroxyl group of serine or threonine residues. The chain is Protein O-mannosyl-transferase Tmtc2 from Drosophila melanogaster (Fruit fly).